A 189-amino-acid chain; its full sequence is Chitin synthase 2 (189 aa).

It belongs to the chitin synthase family. Class II subfamily.

It is found in the cell membrane. The enzyme catalyses [(1-&gt;4)-N-acetyl-beta-D-glucosaminyl](n) + UDP-N-acetyl-alpha-D-glucosamine = [(1-&gt;4)-N-acetyl-beta-D-glucosaminyl](n+1) + UDP + H(+). In terms of biological role, polymerizes chitin, a structural polymer of the cell wall and septum, by transferring the sugar moiety of UDP-GlcNAc to the non-reducing end of the growing chitin polymer. This Aspergillus niger protein is Chitin synthase 2 (chs2).